A 99-amino-acid polypeptide reads, in one-letter code: DNA-binding protein HU (99 aa).

The disordered stretch occupies residues 63-82 (HRKEREGRNPKTGAKMKIDA).

This sequence belongs to the bacterial histone-like protein family. Homodimer.

In terms of biological role, histone-like DNA-binding protein which is capable of wrapping DNA to stabilize it, and thus to prevent its denaturation under extreme environmental conditions. The polypeptide is DNA-binding protein HU (hup) (Rickettsia prowazekii (strain Madrid E)).